Consider the following 313-residue polypeptide: UPF0761 membrane protein VV0203 (313 aa).

The next 6 membrane-spanning stretches (helical) occupy residues 41-61 (YLAY…LSIL), 104-124 (MTAV…SNID), 139-159 (AVFS…LVGA), 185-205 (LLRW…YLLV), 215-235 (AVVG…GFAA), and 249-269 (ALAA…IVLI). Residues 293–313 (LPNNDTELEKDTQRDRFDSES) form a disordered region. Residues 299-313 (ELEKDTQRDRFDSES) are compositionally biased toward basic and acidic residues.

It belongs to the UPF0761 family.

The protein localises to the cell inner membrane. The sequence is that of UPF0761 membrane protein VV0203 from Vibrio vulnificus (strain YJ016).